Reading from the N-terminus, the 419-residue chain is MRGLLVLSVLLGAVFGKEDFVGHQVLRISVADEAQVQKVKELEDLEHLQLDFWRGPAHPGSPIDVRVPFPSIQAVKIFLESHGISYETMIEDVQSLLDEEQEQMFAFRSRARSTDTFNYATYHTLEEIYDFLDLLVAENPHLVSKIQIGNTYEGRPIYVLKFSTGGSKRPAIWIDTGIHSREWVTQASGVWFAKKITQDYGQDAAFTAILDTLDIFLEIVTNPDGFAFTHSTNRMWRKTRSHTAGSLCIGVDPNRNWDAGFGLSGASSNPCSETYHGKFANSEVEVKSIVDFVKDHGNIKAFISIHSYSQLLMYPYGYKTEPVPDQDELDQLSKAAVTALASLYGTKFNYGSIIKAIYQASGSTIDWTYSQGIKYSFTFELRDTGRYGFLLPASQIIPTAKETWLALLTIMEHTLNHPY.

The first 16 residues, 1-16, serve as a signal peptide directing secretion; the sequence is MRGLLVLSVLLGAVFG. Residues 17–110 constitute a propeptide, activation peptide; it reads KEDFVGHQVL…QEQMFAFRSR (94 aa). The Peptidase M14 domain occupies 121–414; that stretch reads TYHTLEEIYD…LALLTIMEHT (294 aa). 2 residues coordinate Zn(2+): H179 and E182. Residues 179-182, R237, and 254-255 contribute to the substrate site; these read HSRE and NR. The cysteines at positions 248 and 271 are disulfide-linked. Position 306 (H306) interacts with Zn(2+). Substrate contacts are provided by residues 307–308 and Y358; that span reads SY. E380 acts as the Proton donor/acceptor in catalysis.

This sequence belongs to the peptidase M14 family. In terms of assembly, monomer. May form a complex with proelastase 2. Requires Zn(2+) as cofactor.

It is found in the secreted. It catalyses the reaction Release of a C-terminal amino acid, but little or no action with -Asp, -Glu, -Arg, -Lys or -Pro.. It carries out the reaction leukotriene C4 + H2O = leukotriene F4 + glycine. Inhibited by interaction with the S.magnifica carboxypeptidase inhibitor SmCI. Functionally, carboxypeptidase that catalyzes the release of a C-terminal amino acid, but has little or no action with -Asp, -Glu, -Arg, -Lys or -Pro. Catalyzes the conversion of leukotriene C4 to leukotriene F4 via the hydrolysis of an amide bond. The chain is Carboxypeptidase A1 from Homo sapiens (Human).